Consider the following 165-residue polypeptide: ATP synthase subunit b (165 aa).

The helical transmembrane segment at 5 to 25 (LVGITWEFVFQIVNTFIIFLL) threads the bilayer.

It belongs to the ATPase B chain family. In terms of assembly, F-type ATPases have 2 components, F(1) - the catalytic core - and F(0) - the membrane proton channel. F(1) has five subunits: alpha(3), beta(3), gamma(1), delta(1), epsilon(1). F(0) has three main subunits: a(1), b(2) and c(10-14). The alpha and beta chains form an alternating ring which encloses part of the gamma chain. F(1) is attached to F(0) by a central stalk formed by the gamma and epsilon chains, while a peripheral stalk is formed by the delta and b chains.

Its subcellular location is the cell membrane. In terms of biological role, f(1)F(0) ATP synthase produces ATP from ADP in the presence of a proton or sodium gradient. F-type ATPases consist of two structural domains, F(1) containing the extramembraneous catalytic core and F(0) containing the membrane proton channel, linked together by a central stalk and a peripheral stalk. During catalysis, ATP synthesis in the catalytic domain of F(1) is coupled via a rotary mechanism of the central stalk subunits to proton translocation. Its function is as follows. Component of the F(0) channel, it forms part of the peripheral stalk, linking F(1) to F(0). The polypeptide is ATP synthase subunit b (Clostridioides difficile (strain 630) (Peptoclostridium difficile)).